The chain runs to 275 residues: Serine/threonine-protein phosphatase PGAM5, mitochondrial (275 aa).

Residues 7-24 (LIAGGSAAAAILGVVAAG) traverse the membrane as a helical segment.

The protein belongs to the phosphoglycerate mutase family. BPG-dependent PGAM subfamily. In terms of processing, phosphorylated by the RIPK1/RIPK3 complex under necrotic conditions. This phosphorylation increases PGAM5 phosphatase activity.

The protein resides in the mitochondrion outer membrane. The catalysed reaction is O-phospho-L-seryl-[protein] + H2O = L-seryl-[protein] + phosphate. It catalyses the reaction O-phospho-L-threonyl-[protein] + H2O = L-threonyl-[protein] + phosphate. In terms of biological role, displays phosphatase activity for serine/threonine residues. Has apparently no phosphoglycerate mutase activity. May be regulator of mitochondrial dynamics. May be a central mediator for programmed necrosis. This chain is Serine/threonine-protein phosphatase PGAM5, mitochondrial (pgam5), found in Xenopus laevis (African clawed frog).